We begin with the raw amino-acid sequence, 121 residues long: Large ribosomal subunit protein uL14 (121 aa).

Belongs to the universal ribosomal protein uL14 family. In terms of assembly, part of the 50S ribosomal subunit. Forms a cluster with proteins L3 and L19. In the 70S ribosome, L14 and L19 interact and together make contacts with the 16S rRNA in bridges B5 and B8.

Functionally, binds to 23S rRNA. Forms part of two intersubunit bridges in the 70S ribosome. The chain is Large ribosomal subunit protein uL14 from Aquifex aeolicus (strain VF5).